Reading from the N-terminus, the 259-residue chain is Sphinganine C4-monooxygenase 2 (259 aa).

The next 3 helical transmembrane spans lie at 10 to 30 (FLGT…YICL), 54 to 74 (AVVK…VILF), and 91 to 111 (ILLL…WQYF). Residues 98 to 234 (FIIAMLVIDT…FVMWDRILGT (137 aa)) form the Fatty acid hydroxylase domain. A Histidine box-1 motif is present at residues 113 to 117 (HRYMH). Residues 127-131 (HSQHH) carry the Histidine box-2 motif. Residues 206–212 (YHDVHHQ) carry the Histidine box-3 motif.

This sequence belongs to the sterol desaturase family. It depends on Fe cation as a cofactor. In terms of tissue distribution, ubiquitous, with higher levels in flowers and roots.

The protein resides in the endoplasmic reticulum membrane. It carries out the reaction a dihydroceramide + 2 Fe(II)-[cytochrome b5] + O2 + 2 H(+) = a phytoceramide + 2 Fe(III)-[cytochrome b5] + H2O. It functions in the pathway membrane lipid metabolism; sphingolipid biosynthesis. Involved in sphingolipid trihydroxy long-chain base (4-hydroxysphinganine) biosynthesis. Can use C18- and C20-sphinganine as substrates to produce C18- and C20-phytosphinganines (D-ribo-2-amino-1,3,4-trihydroxyoctadecane and -eicosane). This chain is Sphinganine C4-monooxygenase 2 (SBH2), found in Arabidopsis thaliana (Mouse-ear cress).